The sequence spans 99 residues: U2-theraphotoxin-Lsp1a (99 aa).

An N-terminal signal peptide occupies residues 1 to 22; it reads MNTIQVIIFAVVLVLTVTVGQA. Positions 23-57 are excised as a propeptide; it reads DEDSPEASLLRKLKEAEASLFGQNLEESRNSRQKR. 3 cysteine pairs are disulfide-bonded: cysteine 58–cysteine 73, cysteine 65–cysteine 78, and cysteine 72–cysteine 93.

Belongs to the neurotoxin 14 (magi-1) family. 08 (Ltx-4) subfamily. Expressed by the venom gland.

It localises to the secreted. Functionally, insecticidal neurotoxin. This chain is U2-theraphotoxin-Lsp1a, found in Lasiodora sp. (strain IBSP 8539) (Brazilian salmon pink birdeater).